A 72-amino-acid chain; its full sequence is uncharacterized protein (72 aa).

At 1–12 the chain is on the cytoplasmic side; sequence MSKHKHEWTESV. The helical transmembrane segment at 13-32 threads the bilayer; sequence ANSGPASILSYCASSILMTV. At 33–46 the chain is on the lumenal side; sequence TNKFVVNLDNFNMN. The chain crosses the membrane as a helical span at residues 47 to 69; that stretch reads FVMLFVQSLVCTVTLCILRIVGV. The Cytoplasmic segment spans residues 70–72; it reads ANF.

Belongs to the TPT transporter family. SLC35D subfamily.

It is found in the membrane. This is an uncharacterized protein from Saccharomyces cerevisiae (strain RM11-1a) (Baker's yeast).